Consider the following 248-residue polypeptide: Putative eukaryotic initiation factor 4A-like protein (248 aa).

Residues 14–42 (VGFASLGLNEQLINNIKRYGITKLTPFQM) carry the Q motif motif. In terms of domain architecture, Helicase ATP-binding spans 45–239 (IKEIKENSNV…NTFIKIPKII (195 aa)). 58 to 65 (SIEGTGRT) serves as a coordination point for ATP. Residues 185-188 (DELD) carry the DEAD box motif.

It belongs to the DEAD box helicase family. eIF4A subfamily.

The polypeptide is Putative eukaryotic initiation factor 4A-like protein (Dictyostelium discoideum (Social amoeba)).